The following is a 555-amino-acid chain: Protein NRT1/ PTR FAMILY 2.1 (555 aa).

12 helical membrane passes run 32 to 52 (TLLG…VFLI), 68 to 88 (IVNG…DSFF), 91 to 111 (IPVI…LTLI), 127 to 147 (ILCQ…LALV), 175 to 195 (FFNW…TAIV), 205 to 225 (LGFG…ISGK), 324 to 344 (VLPL…QASM), 369 to 389 (VIVL…IYPI), 401 to 421 (LQQV…SAIV), 437 to 457 (VLWL…HYMA), 476 to 496 (SVTS…INLI), and 517 to 537 (WVLV…SWYF).

It belongs to the major facilitator superfamily. Proton-dependent oligopeptide transporter (POT/PTR) (TC 2.A.17) family. In terms of tissue distribution, expressed in roots.

It localises to the membrane. Transporter involved in a passive nitrate efflux. The sequence is that of Protein NRT1/ PTR FAMILY 2.1 (NPF2.1) from Arabidopsis thaliana (Mouse-ear cress).